The primary structure comprises 209 residues: Ribosomal RNA large subunit methyltransferase E (209 aa).

S-adenosyl-L-methionine-binding residues include Gly-63, Trp-65, Asp-83, Asp-99, and Asp-124. Lys-164 functions as the Proton acceptor in the catalytic mechanism.

It belongs to the class I-like SAM-binding methyltransferase superfamily. RNA methyltransferase RlmE family.

Its subcellular location is the cytoplasm. It catalyses the reaction uridine(2552) in 23S rRNA + S-adenosyl-L-methionine = 2'-O-methyluridine(2552) in 23S rRNA + S-adenosyl-L-homocysteine + H(+). Its function is as follows. Specifically methylates the uridine in position 2552 of 23S rRNA at the 2'-O position of the ribose in the fully assembled 50S ribosomal subunit. This Sodalis glossinidius (strain morsitans) protein is Ribosomal RNA large subunit methyltransferase E.